We begin with the raw amino-acid sequence, 571 residues long: Proline--tRNA ligase (571 aa).

Belongs to the class-II aminoacyl-tRNA synthetase family. ProS type 1 subfamily. Homodimer.

Its subcellular location is the cytoplasm. The enzyme catalyses tRNA(Pro) + L-proline + ATP = L-prolyl-tRNA(Pro) + AMP + diphosphate. Its function is as follows. Catalyzes the attachment of proline to tRNA(Pro) in a two-step reaction: proline is first activated by ATP to form Pro-AMP and then transferred to the acceptor end of tRNA(Pro). As ProRS can inadvertently accommodate and process non-cognate amino acids such as alanine and cysteine, to avoid such errors it has two additional distinct editing activities against alanine. One activity is designated as 'pretransfer' editing and involves the tRNA(Pro)-independent hydrolysis of activated Ala-AMP. The other activity is designated 'posttransfer' editing and involves deacylation of mischarged Ala-tRNA(Pro). The misacylated Cys-tRNA(Pro) is not edited by ProRS. This is Proline--tRNA ligase from Vibrio parahaemolyticus serotype O3:K6 (strain RIMD 2210633).